Reading from the N-terminus, the 1371-residue chain is MAYSIANNPLLRKNFAKIHKIIDIPNLIDIQKNSYKRFLQLDTPVDARKNSGLEAVFRSVFPIRDFSDTASLEYVSYSLGAPKYDVEECHQRGMTFAAPMKVKVRLVVWDVAKDPGTRSIRDIKEQEVYFGEIPLMTDNGTFIINGTERVIVSQLHRSPGVFYDHDKGKTHSSGKVLYSARVIPYRGSWLDFEFDHKDILYVRIDRRRKMPATVLLKALGYSNDALINYFYKSEDVKVGDNGSMTKIADAELLSNQKATADIVDPATGEVILKANRKFTKAAIRKMSEHGIKEIPISEEEVVGKVASHDIYDPATGEIIVECNEELTQAKLEEIIQKGITTFQVLFIDNLHVTSSFRDTILIDKIGSTDEALIEIYRRLRPGDPPTLKSALVLFENLFFNAERYDLSAVGRLKLNYKLGVDVPLDCMTLTREDILEVVRYLIELKNGKGNIDDIDHLGNRRVRAVGELLENQYRIGLVRMERAIKERMSLQEVENLMPHDLINSKPVSAVVKEFFGSSQLSQFMDQTNPLSEVTHKRRLSALGPGGLTRERAGFEVRDVHPTHYGRVCPIETPEGPNIGLIASLSTYARINEHGFVETPYRVVKEGRVTDEVRFFSALEEEGHAIAQANAEIDETGRFAADYISARKSGEFVLVGRDELELMDVAPMQLVSVAASLIPFLENDDANRALMGSNMQRQAVPLLRADSPLVGTGMERVVARDSGVSLVARHNGVVESVDASRIVVKIDEDQYDATGTGVDIYNLIKFARSNQNTCINQRPLVKVGDHVTAGDIIADGPSTDMGELALGQNVLIAFMPWGGYNYEDSILISERLVKDDRYTSIHIEEFEAVARDTKLGKEEITSDIPNLGEETLKDLDESGIIRIGAEVRPGDILVGKITPKGETQLSPEEKLLRAIFGEKAGDVRDTSLRVPPGVEGTVIGAKIFSRKGADKDARTEIIEKAEEMRLRKDEQDEIRIIRDSAIGKLKKLLVGKTAAVKIEGTDGKVLIPKGAAITEEMLKSFSMDRWDEISIADDDTVDEKVAQTLSTLNQQIDIIKYVFDDKVQKLRRGDDLPPGVIKMVKVYIAIKRKLQVGDKMAGRHGNKGVVSRILPEEDMPYMEDGRPVEIVLNPLGVPSRMNVGQILEMHLGWAAKGLGWKIEEFLDKNAPHDEIKRFLKGAYNNPDMDRFLDKLEGEELLNVAKRLKRGVPMSSPVFEGASEESIQSMLSHAGFSTTGQVTLFDGKSGDKFMHQVTVGIMYFLKLHHLVDDKIHARSIGPYSLVTQQPLGGKAQFGGQRLGEMEVWAMEAYGAAYALQEFLTVKSDDVAGRTRMYEAIVKGKHTLEPGLPESFNVLIKELQSLGLDVELLEGDED.

The protein belongs to the RNA polymerase beta chain family. In terms of assembly, the RNAP catalytic core consists of 2 alpha, 1 beta, 1 beta' and 1 omega subunit. When a sigma factor is associated with the core the holoenzyme is formed, which can initiate transcription.

It carries out the reaction RNA(n) + a ribonucleoside 5'-triphosphate = RNA(n+1) + diphosphate. Its function is as follows. DNA-dependent RNA polymerase catalyzes the transcription of DNA into RNA using the four ribonucleoside triphosphates as substrates. The chain is DNA-directed RNA polymerase subunit beta from Geobacter sp. (strain M21).